The following is a 506-amino-acid chain: Sugar transport protein 5 (506 aa).

At 1 to 19 (MAGGGLALDVSSAGNIDAK) the chain is on the cytoplasmic side. Helical transmembrane passes span 20 to 40 (ITAAVVMSCIVAASCGLIFGY), 81 to 101 (LLTAFTSSLYVAGLVASLVAS), 117 to 137 (GFTFLFGALINGLAANIAMLI), 141 to 161 (ILLGFGVGFTNQAAPVYLSEV), 168 to 188 (GAFNIGFSCFISMGVVAANLI), 201 to 221 (ISLGLAAVPAAIMTVGCLFIS), 287 to 307 (LVVAVVIPCFQQLTGITVNAF), 325 to 345 (IATFILGFVNLGSLLLSTMVI), 352 to 372 (FLFIAGGILMLLCQIAVAVLL), 390 to 410 (VTVVVLLCIYAAGFGWSWGPL), 430 to 450 (LSVAVNFAATFALSQTFLATL), and 456 to 476 (GAFLFYGGWIFTMTIFVIMFL). The Cytoplasmic portion of the chain corresponds to 477–506 (PETKGIPVDSMYQVWEKHWYWQRFTKPTST).

This sequence belongs to the major facilitator superfamily. Sugar transporter (TC 2.A.1.1) family.

The protein localises to the membrane. In terms of biological role, mediates an active uptake of hexoses, probably by sugar/hydrogen symport. In Arabidopsis thaliana (Mouse-ear cress), this protein is Sugar transport protein 5 (STP5).